The chain runs to 462 residues: Metacaspase-1 (462 aa).

A compositionally biased stretch (pro residues) spans 1–21 (MSYYPPPSGYPGGPPAYPPPQ). The tract at residues 1 to 150 (MSYYPPPSGY…PPPPSGSVAF (150 aa)) is disordered. Over residues 22–33 (QQQQQQQQYPSY) the composition is skewed to low complexity. 2 stretches are compositionally biased toward pro residues: residues 49-69 (PSYP…PPHS) and 77-102 (SPQP…PPSP). Residues His-253 and Cys-309 contribute to the active site.

The protein belongs to the peptidase C14B family.

Functionally, involved in cell death (apoptosis). In Coccidioides immitis (strain RS) (Valley fever fungus), this protein is Metacaspase-1 (MCA1).